A 297-amino-acid polypeptide reads, in one-letter code: Light-independent protochlorophyllide reductase iron-sulfur ATP-binding protein (297 aa).

Residues 41-46 (GIGKST) and lysine 70 each bind ATP. Serine 45 contacts Mg(2+). [4Fe-4S] cluster-binding residues include cysteine 126 and cysteine 160. Residues 211–212 (NR) and 235–237 (PDL) contribute to the ATP site.

This sequence belongs to the NifH/BchL/ChlL family. Homodimer. Protochlorophyllide reductase is composed of three subunits; BchL, BchN and BchB. It depends on [4Fe-4S] cluster as a cofactor.

It carries out the reaction chlorophyllide a + oxidized 2[4Fe-4S]-[ferredoxin] + 2 ADP + 2 phosphate = protochlorophyllide a + reduced 2[4Fe-4S]-[ferredoxin] + 2 ATP + 2 H2O. The protein operates within porphyrin-containing compound metabolism; bacteriochlorophyll biosynthesis (light-independent). In terms of biological role, component of the dark-operative protochlorophyllide reductase (DPOR) that uses Mg-ATP and reduced ferredoxin to reduce ring D of protochlorophyllide (Pchlide) to form chlorophyllide a (Chlide). This reaction is light-independent. The L component serves as a unique electron donor to the NB-component of the complex, and binds Mg-ATP. The protein is Light-independent protochlorophyllide reductase iron-sulfur ATP-binding protein of Cereibacter sphaeroides (strain ATCC 17025 / ATH 2.4.3) (Rhodobacter sphaeroides).